Reading from the N-terminus, the 284-residue chain is HTH-type transcriptional activator RhaR (284 aa).

An HTH araC/xylS-type domain is found at 181–279 (DMLMNALRAS…GVSPSAYRQR (99 aa)). 2 DNA-binding regions (H-T-H motif) span residues 198–219 (EAFC…KEQT) and 246–269 (IGDI…HQAF).

As to quaternary structure, binds DNA as a dimer.

Its subcellular location is the cytoplasm. Activates expression of the rhaSR operon in response to L-rhamnose. The sequence is that of HTH-type transcriptional activator RhaR from Pectobacterium carotovorum subsp. carotovorum (strain PC1).